The primary structure comprises 1181 residues: MVVMAQTKLCSDIEIPKEVYNKWKDFIKLVGNIILSIKQIPELEGKFKELLKKGRYNFKSDDFGGQLPEPFTRQKVIEPILEFLGYEFTSEISKKSPLGDRKIPDYRVSVFNKEILIEAEPLGSDLNKKDSGIHQVKEWLIIKSYGVDTGIATNGLEWVLLHYDDTIKEIRTLKELNLKSIFEYVLENKKDKDLENELKQVFSEFYYCFSKEYIEEYIEVATKNIKHKKEEITNEFYKEFVKLVFGFEDVKDVKKKDKSSSEKDKGTKKCLYNCIEAPPNTSELDKKKFAVLLMNRLIFIKFLEDKGIVPRDLLRRTYEDYKKSNVLINYYDAYLKPLFYEVLNTPEDERKENIRTNPYYKDIPYLNGGLFRSNNVPNELSFTIKDNEIIGEVINFLERYKFTLSTSEGSEEVELNPDILGYVYEKLINILAEKGQKGLGAYYTPDEITSYIAKNTIEPIVVERFKEIIKNWKINDINFSTLDEILNEDSKIAENKHILRAFLDELDKIRILDPAVGSGHFLISALKELLQIKKRIYYLLREEMDIYKEKLGIILNNLYGVDIDDIAVEIAKLRLWLALIENLDVEALKRGEVLLPNIEYNVRCGNSLVGWIDENLKQLSISYLCDNVRIMCVLEGLIINAHNSEERKKLKKAKELLEKRDGYVLDNYVEAYHLLYEVYRTSHGLKANLLKELLDEIRDSIYESVTPAYFAEIYQNGNNKKNNGKKSKKNRPRVEEFEKLKPFHWKIDFGWIIKEEGFDVIIGNPPYGNLLSPTEKEIMKRRDTPEFDIFVTFIVHSSKLLKNEGYLGFIIPSSFGTGVRYSNLRKELFTKMCLKKLIYLPFDVFSGAYVDNCIIILHKKPPKSEDLVLIYAFPKKTKKISFEFKNDLFIEYSKILNDPKCRIFPKSPEIYIILDKIKQNCRESLTYLEDLTESTIGILASKYKFSDKKENEYYLPYLEGNVYRYETKLKLKNYVDFSKHKNNEKLINLFMSPEKIFIRRIVNRQDRIMASYGNIEGVVKKDLYVFVLKPDTPINYFYLLGILNSELISYIYIGKSAIALKDDFRQTTLEELRELPIVIPKNKNIINALTQLSKLRFELNDKLNENDRIFLENIIDSLVYGIYFQDLIPKEELNEICNEINGIIKKYDEKSIDCLKYCQNIIKLLNTINTNELVRKIRNKN.

The protein in the C-terminal section; belongs to the N(4)/N(6)-methyltransferase family.

The enzyme catalyses Endonucleolytic cleavage of DNA to give specific double-stranded fragments with terminal 5'-phosphates.. The catalysed reaction is a 2'-deoxyadenosine in DNA + S-adenosyl-L-methionine = an N(6)-methyl-2'-deoxyadenosine in DNA + S-adenosyl-L-homocysteine + H(+). Probably a G subtype restriction enzyme that recognizes an undetermined sequence and cleaves at an undetermined site. Probably also acts as an alpha subtype methylase, presumably on the same sequence. In Methanocaldococcus jannaschii (strain ATCC 43067 / DSM 2661 / JAL-1 / JCM 10045 / NBRC 100440) (Methanococcus jannaschii), this protein is Putative type II restriction enzyme and methyltransferase RM.MjaORFECS2P.